The chain runs to 79 residues: U-actitoxin-Oulsp1 (79 aa).

A signal peptide spans 1–21 (MNTKLVVVFLLSAILFVSVTA). Positions 22–43 (SRPGKDLERDEAYETYDDENKR) are excised as a propeptide. The region spanning 45–79 (CKDVFPAATCRHAKSVGNCSSEKYKRNCAITCGAC) is the ShKT domain. Disulfide bonds link cysteine 45-cysteine 79, cysteine 54-cysteine 72, and cysteine 63-cysteine 76. The interval 67 to 68 (KY) is crucial for binding to potassium channels.

The protein belongs to the sea anemone type 1 potassium channel toxin family. Type 1b subfamily. Two similar peptides (OspTx2a-p1 and -p2) are obtained after synthesis and oxidative folding. They may differ by a D-Cys at position 76 (corresponding to OspTx2a-p2). Since C-terminal Cys residues are prone to racemization during solid-phase peptide synthesis, and if the presence of a D-amino acid is correct, it is probable that OspTx2a-p1 (L-Cys-76 form) corresponds to the native peptide.

Its subcellular location is the secreted. Toxin that weakly blocks the two voltage-gated potassium channels on Kv1.2/KCNA2 (IC(50)=1.8-2.5 uM) and Kv1.6/KCNA6 (IC(50)=5.6-6.2 uM). The chain is U-actitoxin-Oulsp1 from Oulactis sp. (Sea anemone).